A 331-amino-acid polypeptide reads, in one-letter code: D-aspartate oxidase 2 (331 aa).

Aspartate 35, lysine 36, serine 43, and glycine 307 together coordinate FAD.

It belongs to the DAMOX/DASOX family. The cofactor is FAD.

It localises to the cytoplasm. The catalysed reaction is D-aspartate + O2 + H2O = oxaloacetate + H2O2 + NH4(+). The enzyme catalyses D-glutamate + O2 + H2O = H2O2 + 2-oxoglutarate + NH4(+). In terms of biological role, selectively catalyzes the oxidative deamination of acidic amino acids. May play a role in the egg-laying events and early development of the worm, in addition to quality control of the germ cells. This Caenorhabditis briggsae protein is D-aspartate oxidase 2.